A 305-amino-acid chain; its full sequence is Autophagy-related protein 27 (305 aa).

An N-terminal signal peptide occupies residues 1–22; that stretch reads MARYKGLSILSLFAVFSSLASA. At 23-242 the chain is on the lumenal side; the sequence is ELDCSNIKVD…EDGGSAPSGH (220 aa). Residues 24-231 form the MRH domain; sequence LDCSNIKVDG…EWKTKYACEN (208 aa). 2 disulfide bridges follow: cysteine 26–cysteine 66 and cysteine 74–cysteine 81. N-linked (GlcNAc...) asparagine glycosylation is present at asparagine 58. An N-linked (GlcNAc...) asparagine glycan is attached at asparagine 85. Cysteine 156 and cysteine 229 are oxidised to a cystine. The tract at residues 163–202 is disordered; sequence LEGLESPKPDGDKKKDGEKKDDDKKDNKDKEGKSKRDGEE. A helical membrane pass occupies residues 243 to 263; it reads WGFFTWVIVLYVVLVSLPLLS. Topologically, residues 264–305 are cytoplasmic; the sequence is ERVTNVRCHSQPVPVHFGLSDIRLVAQLQPVWSSRVGLASSQ.

Belongs to the ATG27 family.

Its subcellular location is the cytoplasmic vesicle membrane. The protein resides in the golgi apparatus membrane. It is found in the mitochondrion membrane. The protein localises to the preautophagosomal structure membrane. Effector of phosphatidylinositol 3-phosphate kinase signaling. Regulates the cytoplasm to vacuole transport (Cvt) vesicle formation. Plays a role in ATG protein retrieval from the pre-autophagosomal structure (PAS). This is Autophagy-related protein 27 from Arthroderma benhamiae (strain ATCC MYA-4681 / CBS 112371) (Trichophyton mentagrophytes).